The sequence spans 178 residues: S-alkylcysteine N-acetyltransferase (178 aa).

In terms of domain architecture, N-acetyltransferase spans 4–163; it reads DIFRLATVED…IGVMMHKVLI (160 aa).

This sequence belongs to the acetyltransferase family.

The enzyme catalyses an S-substituted L-cysteine + acetyl-CoA = an N-acetyl-L-cysteine-S-conjugate + CoA + H(+). The catalysed reaction is S-benzyl-L-cysteine + acetyl-CoA = N-acetyl-S-benzyl-L-cysteine + CoA + H(+). It catalyses the reaction S-methyl-L-cysteine + acetyl-CoA = N-acetyl-S-methyl-L-cysteine + CoA + H(+). Its pathway is amino-acid metabolism. In terms of biological role, involved in a cysteine salvage pathway from S-alkylcysteine. Catalyzes the first step in this pathway, i.e. the amine acetylation of an S-alkylcysteine with a preference for S-benzyl-L-cysteine over S-methyl-L-cysteine. This pathway is likely important in the catabolism of alkylated cysteine generated by proteolysis of alkylated glutathione formed in the detoxification of a wide range of electrophiles. The protein is S-alkylcysteine N-acetyltransferase of Bacillus subtilis (strain 168).